Here is a 737-residue protein sequence, read N- to C-terminus: Polyribonucleotide nucleotidyltransferase (737 aa).

Positions 489 and 495 each coordinate Mg(2+). A KH domain is found at 556–615 (PKIDTIKIDVDKIKIVIGKGGETIDKIIAETGVKIDIDEEGNVSIYSSDQDAINRAKEII). The 69-residue stretch at 625–693 (DEVYRAKVVR…EKGRIDASMK (69 aa)) folds into the S1 motif domain. The segment at 691–737 (SMKALLPRPPKPEHDEKGEKSERPHRPRHQKDYKPKKEFTETSKDSE) is disordered. Positions 700–737 (PKPEHDEKGEKSERPHRPRHQKDYKPKKEFTETSKDSE) are enriched in basic and acidic residues.

It belongs to the polyribonucleotide nucleotidyltransferase family. Requires Mg(2+) as cofactor.

It localises to the cytoplasm. The catalysed reaction is RNA(n+1) + phosphate = RNA(n) + a ribonucleoside 5'-diphosphate. Its function is as follows. Involved in mRNA degradation. Catalyzes the phosphorolysis of single-stranded polyribonucleotides processively in the 3'- to 5'-direction. This chain is Polyribonucleotide nucleotidyltransferase, found in Streptococcus pneumoniae serotype 4 (strain ATCC BAA-334 / TIGR4).